Consider the following 205-residue polypeptide: GTP cyclohydrolase-2 (205 aa).

49 to 53 serves as a coordination point for GTP; it reads RLHSE. 3 residues coordinate Zn(2+): Cys-54, Cys-65, and Cys-67. GTP contacts are provided by residues Gln-70, 92–94, and Thr-114; that span reads EGR. The active-site Proton acceptor is the Asp-126. Catalysis depends on Arg-128, which acts as the Nucleophile. GTP contacts are provided by Thr-149 and Lys-154.

It belongs to the GTP cyclohydrolase II family. Requires Zn(2+) as cofactor.

The enzyme catalyses GTP + 4 H2O = 2,5-diamino-6-hydroxy-4-(5-phosphoribosylamino)-pyrimidine + formate + 2 phosphate + 3 H(+). The protein operates within cofactor biosynthesis; riboflavin biosynthesis; 5-amino-6-(D-ribitylamino)uracil from GTP: step 1/4. Functionally, catalyzes the conversion of GTP to 2,5-diamino-6-ribosylamino-4(3H)-pyrimidinone 5'-phosphate (DARP), formate and pyrophosphate. In Pseudomonas entomophila (strain L48), this protein is GTP cyclohydrolase-2.